The chain runs to 628 residues: Beta-galactosidase large subunit (628 aa).

Residue Glu468 is the Proton donor of the active site. The active-site Nucleophile is Glu536.

The protein belongs to the glycosyl hydrolase 2 family. In terms of assembly, heterodimer of a large (LacL) and a small subunit (LacM).

It catalyses the reaction Hydrolysis of terminal non-reducing beta-D-galactose residues in beta-D-galactosides.. In terms of biological role, component of a beta-galactosidase. The polypeptide is Beta-galactosidase large subunit (lacL) (Lactobacillus acidophilus (strain ATCC 700396 / NCK56 / N2 / NCFM)).